The sequence spans 316 residues: Myb-related protein 306 (316 aa).

HTH myb-type domains are found at residues 9 to 65 (KIGV…RPGI) and 66 to 116 (KRGD…KKKL). DNA-binding regions (H-T-H motif) lie at residues 37 to 61 (WRAI…TNYL) and 89 to 112 (WAAI…NTHL). 3 disordered regions span residues 119 to 144 (LQSP…SKGQ), 168 to 193 (KTSS…QAST), and 209 to 230 (KKSP…TTTS). Residues 135-144 (DSDKSVSKGQ) are compositionally biased toward basic and acidic residues. Residues 181 to 193 (VQTTQPRPFQAST) show a composition bias toward polar residues. The span at 216-230 (SSTSQAGSSESTTTS) shows a compositional bias: low complexity.

In terms of tissue distribution, expressed in flowers, leaves and weakly in seed pods.

It localises to the nucleus. Transcription factor. In Antirrhinum majus (Garden snapdragon), this protein is Myb-related protein 306.